The sequence spans 414 residues: MSGGDKRQPEVNIGVVGHVDHGKTTLVQALTGVWTMRHSEEIRRGMTIKLGYADGEVWECEGCGFPERFSPEPVCECDPQASASLRRRVSYVDAPGHEILMATMLSGAALMDGALLVVAANEPCPQPQTKEHLVALEIIGIKNIVIVQNKVDVVSRERAKESYQEILNFIKGTIAEGSPIIPVSALKRANIDAVLAAIEKFIPTPPRDLDKPPVMYISRSFDVNRPGTPPERLVGGVVGGSIIQGVFRVGDEIEISPGVAVRKPGGRVEYVRLHTTITSLRFGSIEVEEARPGGLVAIGTQLDPSVTKADNLVGNVVGKPGELPEPLTTLRIEHHLLEKVVGMKEEARVEPIRRGEMLMLSVGTAITLGVVTRAGKDEIEVQLRRPVVTWPKARVALSRRIMGRWRLIGWGLIK.

The 199-residue stretch at glutamine 8–proline 206 folds into the tr-type G domain. Positions glycine 17 to threonine 24 are G1. Aspartate 20, threonine 24, glycine 45, and threonine 47 together coordinate Mg(2+). Residue aspartate 20–threonine 25 coordinates GTP. Positions glycine 45 to lysine 49 are G2. Zn(2+)-binding residues include cysteine 60, cysteine 63, cysteine 75, and cysteine 77. A G3 region spans residues aspartate 93 to glycine 96. GTP contacts are provided by residues asparagine 149 to aspartate 152 and serine 184 to leucine 186. Residues asparagine 149 to aspartate 152 form a G4 region. The segment at serine 184–leucine 186 is G5.

This sequence belongs to the TRAFAC class translation factor GTPase superfamily. Classic translation factor GTPase family. EIF2G subfamily. As to quaternary structure, heterotrimer composed of an alpha, a beta and a gamma chain. It depends on Mg(2+) as a cofactor.

It catalyses the reaction GTP + H2O = GDP + phosphate + H(+). In terms of biological role, eIF-2 functions in the early steps of protein synthesis by forming a ternary complex with GTP and initiator tRNA. This Aeropyrum pernix (strain ATCC 700893 / DSM 11879 / JCM 9820 / NBRC 100138 / K1) protein is Translation initiation factor 2 subunit gamma.